We begin with the raw amino-acid sequence, 300 residues long: GTPase Era (300 aa).

In terms of domain architecture, Era-type G spans 6 to 173 (KSGFVAIVGR…MDVLVEQMPE (168 aa)). Residues 14 to 21 (GRPNVGKS) are G1. Residue 14–21 (GRPNVGKS) participates in GTP binding. Positions 40 to 44 (QTTRN) are G2. The G3 stretch occupies residues 61 to 64 (DTPG). Residues 61–65 (DTPGI) and 123–126 (NKID) contribute to the GTP site. A G4 region spans residues 123–126 (NKID). A G5 region spans residues 152–154 (ISA). Residues 204–281 (TRDEIPHSVA…YLELWVKVQK (78 aa)) enclose the KH type-2 domain.

It belongs to the TRAFAC class TrmE-Era-EngA-EngB-Septin-like GTPase superfamily. Era GTPase family. Monomer.

Its subcellular location is the cytoplasm. The protein localises to the cell membrane. Its function is as follows. An essential GTPase that binds both GDP and GTP, with rapid nucleotide exchange. Plays a role in 16S rRNA processing and 30S ribosomal subunit biogenesis and possibly also in cell cycle regulation and energy metabolism. The polypeptide is GTPase Era (Enterococcus faecalis (strain ATCC 700802 / V583)).